Here is a 333-residue protein sequence, read N- to C-terminus: Ornithine carbamoyltransferase (333 aa).

Residues 56-59 (STRT), Q83, R107, and 134-137 (HPTQ) each bind carbamoyl phosphate. L-ornithine is bound by residues N167, D231, and 235 to 236 (SM). Carbamoyl phosphate is bound by residues 273–274 (CL) and R318.

It belongs to the aspartate/ornithine carbamoyltransferase superfamily. OTCase family.

Its subcellular location is the cytoplasm. The catalysed reaction is carbamoyl phosphate + L-ornithine = L-citrulline + phosphate + H(+). Its pathway is amino-acid biosynthesis; L-arginine biosynthesis; L-arginine from L-ornithine and carbamoyl phosphate: step 1/3. Its function is as follows. Has vitronectin and fibronectin-binding activity. In terms of biological role, reversibly catalyzes the transfer of the carbamoyl group from carbamoyl phosphate (CP) to the N(epsilon) atom of ornithine (ORN) to produce L-citrulline. The protein is Ornithine carbamoyltransferase (argF) of Staphylococcus epidermidis (strain ATCC 12228 / FDA PCI 1200).